The following is a 119-amino-acid chain: Large ribosomal subunit protein bL19 (119 aa).

It belongs to the bacterial ribosomal protein bL19 family.

This protein is located at the 30S-50S ribosomal subunit interface and may play a role in the structure and function of the aminoacyl-tRNA binding site. The polypeptide is Large ribosomal subunit protein bL19 (Pelobacter propionicus (strain DSM 2379 / NBRC 103807 / OttBd1)).